The following is a 354-amino-acid chain: Homoserine O-succinyltransferase (354 aa).

C146 functions as the Acyl-thioester intermediate in the catalytic mechanism. The substrate site is built by K167 and S196. Catalysis depends on H239, which acts as the Proton acceptor. E241 is an active-site residue. Residue R253 coordinates substrate.

The protein belongs to the MetA family.

It localises to the cytoplasm. The catalysed reaction is L-homoserine + succinyl-CoA = O-succinyl-L-homoserine + CoA. Its pathway is amino-acid biosynthesis; L-methionine biosynthesis via de novo pathway; O-succinyl-L-homoserine from L-homoserine: step 1/1. In terms of biological role, transfers a succinyl group from succinyl-CoA to L-homoserine, forming succinyl-L-homoserine. The chain is Homoserine O-succinyltransferase from Methylobacter tundripaludum (strain ATCC BAA-1195 / DSM 17260 / SV96).